The sequence spans 393 residues: MKPPVNQSCQHYPECAGCDRLHIGYEKQLQHKQEEIEKRFKGFKGLEIRQIIKSPKDQMYRHKVQLPFGHRKIGKKSVLTLGLHNKENTFIIDQKECRIQDEDLTTVAAAIRHWARNENLEPYHEKKGSGLLRHIVLRKANATQEILVGIVTNESEIPGRKKLTDRLYSYIQQFLYKENSKADVVGILQNVNRKNTKVVLGEKEVTWYGRHFVKEKIGKLDFQIGLSTFFQVNPFQIENLYNLILEDLPENKCVVDAYCGIGTISLYIASKSKKVIGLEENSSSIRSAIGASKANGIENVHFIKGKVLDTLRAALNENSDVVVLDPPREGLDAETKSILLNSKVNQILYVSCNPETLLRDAIELTKSFKYEKITPVDLFPHTSHLESVSVFTK.

[4Fe-4S] cluster is bound by residues C9, C15, C18, and C97. S-adenosyl-L-methionine-binding residues include Q231, Y258, E279, and D325. C352 (nucleophile) is an active-site residue.

It belongs to the class I-like SAM-binding methyltransferase superfamily. RNA M5U methyltransferase family.

This is an uncharacterized protein from Leptospira interrogans serogroup Icterohaemorrhagiae serovar Lai (strain 56601).